Consider the following 159-residue polypeptide: 6,7-dimethyl-8-ribityllumazine synthase (159 aa).

5-amino-6-(D-ribitylamino)uracil contacts are provided by residues Tyr-23, 58–60 (AYE), and 82–84 (TII). His-90 functions as the Proton donor in the catalytic mechanism. Ile-115 lines the 5-amino-6-(D-ribitylamino)uracil pocket. Arg-129 lines the (2S)-2-hydroxy-3-oxobutyl phosphate pocket.

This sequence belongs to the DMRL synthase family. Forms an icosahedral capsid composed of 60 subunits, arranged as a dodecamer of pentamers.

It carries out the reaction (2S)-2-hydroxy-3-oxobutyl phosphate + 5-amino-6-(D-ribitylamino)uracil = 6,7-dimethyl-8-(1-D-ribityl)lumazine + phosphate + 2 H2O + H(+). It participates in cofactor biosynthesis; riboflavin biosynthesis; riboflavin from 2-hydroxy-3-oxobutyl phosphate and 5-amino-6-(D-ribitylamino)uracil: step 1/2. In terms of biological role, catalyzes the formation of 6,7-dimethyl-8-ribityllumazine by condensation of 5-amino-6-(D-ribitylamino)uracil with 3,4-dihydroxy-2-butanone 4-phosphate. This is the penultimate step in the biosynthesis of riboflavin. The sequence is that of 6,7-dimethyl-8-ribityllumazine synthase from Buchnera aphidicola subsp. Baizongia pistaciae (strain Bp).